Consider the following 213-residue polypeptide: ATP-dependent Clp protease proteolytic subunit 3 (213 aa).

Ser-107 functions as the Nucleophile in the catalytic mechanism. His-132 is a catalytic residue.

It belongs to the peptidase S14 family. As to quaternary structure, fourteen ClpP subunits assemble into 2 heptameric rings which stack back to back to give a disk-like structure with a central cavity, resembling the structure of eukaryotic proteasomes.

Its subcellular location is the cytoplasm. The catalysed reaction is Hydrolysis of proteins to small peptides in the presence of ATP and magnesium. alpha-casein is the usual test substrate. In the absence of ATP, only oligopeptides shorter than five residues are hydrolyzed (such as succinyl-Leu-Tyr-|-NHMec, and Leu-Tyr-Leu-|-Tyr-Trp, in which cleavage of the -Tyr-|-Leu- and -Tyr-|-Trp bonds also occurs).. Its function is as follows. Cleaves peptides in various proteins in a process that requires ATP hydrolysis. Has a chymotrypsin-like activity. Plays a major role in the degradation of misfolded proteins. The chain is ATP-dependent Clp protease proteolytic subunit 3 from Frankia casuarinae (strain DSM 45818 / CECT 9043 / HFP020203 / CcI3).